The following is a 478-amino-acid chain: Transcription factor PIF1 (478 aa).

The residue at position 10 (threonine 10) is a Phosphothreonine; by CK2. Disordered stretches follow at residues 56 to 80 (LHTK…QPSS), 122 to 144 (VSQV…PVRN), 172 to 210 (VRES…GGGA), 230 to 294 (TSSS…LSER), and 391 to 478 (TQTH…HTTG). Over residues 69–80 (LPSMDPQQQPSS) the composition is skewed to low complexity. Residues 179 to 189 (SPSATPSAAAS) are compositionally biased toward low complexity. Threonine 197 is subject to Phosphothreonine; by CK2. Serine 202 is modified (phosphoserine; by CK2). Basic and acidic residues-rich tracts occupy residues 238–272 (SEIE…ETKQ) and 284–294 (RAAEVHNLSER). A bHLH domain is found at 284–333 (RAAEVHNLSERKRRDRINERMKALQELIPRCNKSDKASMLDEAIEYMKSL). A compositionally biased stretch (polar residues) spans 415 to 426 (PNQQYDPTSGQP). Phosphoserine; by CK2 is present on residues serine 464, serine 465, serine 466, and serine 469. A compositionally biased stretch (basic and acidic residues) spans 465–478 (SSKESEDHGNHTTG).

As to quaternary structure, homodimer. Interacts with the photoactivated conformer (Pfr) of phytochromes A and B, PHYA and PHYB. Also interacts with APRR1/TOC1. Binds to RGL2, RGA and FHY3 (via N-terminus). Associates to PTAC12/HMR/PAP5 which acts as a transcriptional coactivator. Binds directly to PCH1 and PCHL; this interaction facilitates its association with phyB and its subsequent light-induced degradation. Phosphorylated at Thr-10, Thr-197, Ser-202, Ser-464, Ser-465, Ser-466 and Ser-469 by CK2. Phosphorylated and ubiquitinated after an exposure to light (especially red and far-red), in a phytochrome-dependent manner. Modified proteins undergo a proteasome-dependent degradation. Its stability and degradation plays a central role in photomorphogenesis of seedlings. As to expression, mainly expressed in leaves, stems and seedlings, and, to a lower extent, in fruits, flowers and roots.

Its subcellular location is the nucleus. Its activity is regulated as follows. DNA-binding ability is inhibited by PCH1 and PCHL to negatively regulate the expressions of its target genes. Functionally, transcription activator. Negatively regulates chlorophyll biosynthesis and seed germination in the dark, and lightinduced degradation of PIF1 relieves this negative regulation to promote photomorphogenesis. Binds to the G-box motif (5'-CACGTG-3') found in many light-regulated promoters. Promotes the expression of SOM, and thus modulates responses to abscisic acid (ABA) and gibberellic acid (GA). The polypeptide is Transcription factor PIF1 (Arabidopsis thaliana (Mouse-ear cress)).